The primary structure comprises 322 residues: Packaging protein 3 (322 aa).

The segment at 1-24 (MHPILKNIRSQPDQGRAEEHNPEL) is disordered. The interaction with packaging protein 1 stretch occupies residues 1 to 127 (MHPILKNIRS…RDVERWQHDT (127 aa)).

It belongs to the adenoviridae packaging protein 3 family. As to quaternary structure, part of the genome packaging complex composed of packaging proteins 1, 2 and 3; this complex specifically binds to the packaging sequence on the left end of viral genomic DNA and performs packaging of the viral genome. Interacts with hexon-linking protein IIIa; this interaction is required to promote correct genome packaging. Cleaved at different sites by the viral protease during virion maturation.

The protein resides in the host nucleus. In terms of biological role, involved in viral genome packaging through its interaction with packaging proteins 1 and 2. After proteolytic cleavage by adenovirus protease, L1 52/55k protein is removed from the capsid during viral maturation. The protein is Packaging protein 3 of Pantherophis guttatus (Corn snake).